The sequence spans 615 residues: Delta(14)-sterol reductase LBR (615 aa).

The region spanning 1–62 (MPSRKFADGE…DIKPLTSFRQ (62 aa)) is the Tudor domain. Residues 1-211 (MPSRKFADGE…IRAKDLEFGG (211 aa)) are Nuclear-facing. The disordered stretch occupies residues 52-109 (NDIKPLTSFRQRKGGSTSSSPSRRRGSRSRSRSRSPGRPPKSARRSASASHQADIKEA). The residue at position 55 (Lys55) is an N6-acetyllysine. Thr58 bears the Phosphothreonine mark. A phosphoserine mark is found at Ser59 and Ser67. Ser71 and Ser86 each carry phosphoserine; by CDK1. Basic residues predominate over residues 73-86 (SRRRGSRSRSRSRS). Residues Ser97 and Ser99 each carry the phosphoserine modification. Thr118 carries the post-translational modification Phosphothreonine. Ser128 carries the post-translational modification Phosphoserine. Residue Thr200 is modified to Phosphothreonine. The next 8 membrane-spanning stretches (helical) occupy residues 212–232 (VPGV…LLLM), 258–278 (VFGV…LPIG), 299–319 (FYAF…GVEF), 326–346 (FLQF…YLYM), 386–406 (FCEL…MLLA), 447–467 (IIHD…VPFI), 481–501 (EVSW…YVIF), and 561–581 (PCGF…MLLV). An N6-acetyllysine mark is found at Lys594 and Lys601.

The protein belongs to the ERG4/ERG24 family. Interacts with CBX5. Interacts with DNA. Interaction with DNA is sequence independent with higher affinity for supercoiled and relaxed circular DNA than linear DNA. Interacts with lamin B. Interacts with CLNK. Interacts with TMEM147; promoting LBR localization to the nucleus inner membrane. In terms of processing, phosphorylated by CDK1 in mitosis when the inner nuclear membrane breaks down into vesicles that dissociate from the lamina and the chromatin. It is phosphorylated by different protein kinases in interphase when the membrane is associated with these structures. Phosphorylation of LBR and HP1 proteins may be responsible for some of the alterations in chromatin organization and nuclear structure which occur at various times during the cell cycle. Phosphorylated by SRPK1. In late anaphase LBR is dephosphorylated, probably by PP1 and/or PP2A, allowing reassociation with chromatin. In terms of tissue distribution, expressed in the bone marrow, liver, heart, adrenal gland, lung, placenta and uterus. Expressed in osteoclasts and osteoblast-like cells.

It localises to the nucleus inner membrane. The protein localises to the endoplasmic reticulum membrane. The protein resides in the cytoplasm. Its subcellular location is the nucleus. It catalyses the reaction 5alpha-cholest-8,14-dien-3beta-ol + NADPH + H(+) = 5alpha-cholest-8-en-3beta-ol + NADP(+). The enzyme catalyses 4,4-dimethyl-5alpha-cholesta-8,24-dien-3beta-ol + NADP(+) = 4,4-dimethyl-5alpha-cholesta-8,14,24-trien-3beta-ol + NADPH + H(+). It carries out the reaction 4,4-dimethyl-8,14-cholestadien-3beta-ol + NADPH + H(+) = 4,4-dimethyl-5alpha-cholest-8-en-3beta-ol + NADP(+). Its pathway is steroid biosynthesis; cholesterol biosynthesis. Its function is as follows. Catalyzes the reduction of the C14-unsaturated bond of lanosterol, as part of the metabolic pathway leading to cholesterol biosynthesis. Plays a critical role in myeloid cell cholesterol biosynthesis which is essential to both myeloid cell growth and functional maturation. Mediates the activation of NADPH oxidases, perhaps by maintaining critical levels of cholesterol required for membrane lipid raft formation during neutrophil differentiation. Anchors the lamina and the heterochromatin to the inner nuclear membrane. This is Delta(14)-sterol reductase LBR (LBR) from Homo sapiens (Human).